The primary structure comprises 1780 residues: Protein TIC 214 (1780 aa).

A run of 6 helical transmembrane segments spans residues 19-39, 68-88, 91-111, 133-153, 176-196, and 227-247; these read IINSVVVVGLYYGFLTTFSIG, FIAGQLMMFISIYYAPLHLAL, PHTITVLALPYLLFHFFWNNN, VFLNNLIFQLFNHFILPSSML, VGWLIGHILFMKWVGLVLVWI, and IFSILLFITCVYYLGRTPSPI. Positions 251-275 are disordered; sequence KLKGTSETEERGGTKQDQEVSTEEA. A compositionally biased stretch (basic and acidic residues) spans 254 to 268; the sequence is GTSETEERGGTKQDQ.

This sequence belongs to the TIC214 family. In terms of assembly, part of the Tic complex.

It localises to the plastid. It is found in the chloroplast inner membrane. Functionally, involved in protein precursor import into chloroplasts. May be part of an intermediate translocation complex acting as a protein-conducting channel at the inner envelope. In Draba nemorosa (Woodland whitlowgrass), this protein is Protein TIC 214.